A 539-amino-acid polypeptide reads, in one-letter code: uncharacterized protein (539 aa).

The disordered stretch occupies residues 316–433 (AEHHHQKGKK…ATVERSSPPE (118 aa)). Positions 318-352 (HHHQKGKKVPATHRRSSTPHARKTAGTRARTRARK) are enriched in basic residues. The segment covering 362-384 (KISKKDSGESKQKDETAGMERVF) has biased composition (basic and acidic residues). Over residues 390–402 (NVRTCSSRASRTG) the composition is skewed to polar residues.

This is an uncharacterized protein from Treponema pallidum (strain Nichols).